The chain runs to 482 residues: MSPQTETKASVGFKAGVKDYKLNYYTPEYKPQDTDILAAFRVTPQPGVPSEEAGAAVAAESSTGTWTTVWTDGLTSLDRYKGRCYHIDPVAGEDNQYICYVAYPLDLFEEGSVTNMFTSIVGNVFGFKALRALRLEDLRIPIAYIKTFQGPPHGIQVERDKLNKYGRPLLGCTIKPKLGLSAKNYGRAVYECLRGGLDFTKDDENVNSQPFMRWRDRLLFCAEALYKAQAETGEIKGHYLNATAGTCEEMIKRAVFARELGAPIVMHDYLTGGFTANTTLAHYCRDNGLLLHIHRAMHALIDRQKNHGMHFRVLAKALRLSGGDHIHAGTVVGKLEGERDITLGFVDLLRDDHTEIDDARGIYFTQSWVSTPGVLPVASGGIHVWHMPALTEIFGDDSVLQFGGGTLGHPWGNAPGRVANRVALEACVQARNEGRDLASEGNVIIREASKWSPELAAACEVWKEIKFEFPAVDVFHKGKKKN.

Residues 1 to 2 (MS) constitute a propeptide that is removed on maturation. Pro-3 is modified (N-acetylproline). Lys-14 is modified (N6,N6,N6-trimethyllysine). Positions 123 and 173 each coordinate substrate. Lys-175 functions as the Proton acceptor in the catalytic mechanism. Lys-177 is a binding site for substrate. Residues Lys-201, Asp-203, and Glu-204 each coordinate Mg(2+). Lys-201 is modified (N6-carboxylysine). The active-site Proton acceptor is the His-294. 3 residues coordinate substrate: Arg-295, His-327, and Ser-379.

Belongs to the RuBisCO large chain family. Type I subfamily. As to quaternary structure, heterohexadecamer of 8 large chains and 8 small chains; disulfide-linked. The disulfide link is formed within the large subunit homodimers. The cofactor is Mg(2+). The disulfide bond which can form in the large chain dimeric partners within the hexadecamer appears to be associated with oxidative stress and protein turnover.

Its subcellular location is the plastid. The protein localises to the chloroplast. It catalyses the reaction 2 (2R)-3-phosphoglycerate + 2 H(+) = D-ribulose 1,5-bisphosphate + CO2 + H2O. The enzyme catalyses D-ribulose 1,5-bisphosphate + O2 = 2-phosphoglycolate + (2R)-3-phosphoglycerate + 2 H(+). Functionally, ruBisCO catalyzes two reactions: the carboxylation of D-ribulose 1,5-bisphosphate, the primary event in carbon dioxide fixation, as well as the oxidative fragmentation of the pentose substrate in the photorespiration process. Both reactions occur simultaneously and in competition at the same active site. The protein is Ribulose bisphosphate carboxylase large chain of Phytolacca americana (American pokeweed).